The following is a 386-amino-acid chain: MRVLISAVGDTDPFRNFHDGSLIHIARKYRPEKVILIFSEHTAKKQGNIEKALFSIAPNYEPELIIHDPIISDNEVHIFDVMFQRFSDILQEYYTKEDEFILNLSSATPQIKSALFVINRLNGINVKAVQVSSPEHASNENIGHDNDENIDELIEVNKDNKVNFIDRTIEDNAEKFSQALLKKTARDFIEKFDYKAALDILDQLSDFPNLKSVREEIRDVVNCLSKQDVPKGLRHKKLKEEEQKILSAYLTIELQRERGNVSESFIRIKNLTEFILEDYIEKRYPGLIDEYCEDIQKYYLSLFDYSKLLKATKEFKLKRTIAPIIDMNSSRNKVAHSLSPLDSDAVKQLGIAMKTLKTLVREQYHFSQSDFNFYHDLNKILLTKLN.

A CARF domain region spans residues 1–146; sequence MRVLISAVGD…ASNENIGHDN (146 aa). Residues 147-386 form an HEPN domain region; the sequence is DENIDELIEV…LNKILLTKLN (240 aa).

This sequence belongs to the CRISPR-associated Csm6 family. As to quaternary structure, homodimer. The composite ssRNase active site is formed at the dimer interface.

With respect to regulation, non-specific ssRNase activity is stimulated about 1000-fold by cyclic oligoadenylate (cOA), a second messenger produced by Cas10 of the ternary Csm effector complex in the presence of a cognate target RNA. Its function is as follows. CRISPR (clustered regularly interspaced short palindromic repeat) is an adaptive immune system that provides protection against mobile genetic elements (viruses, transposable elements and conjugative plasmids). CRISPR clusters contain spacers, sequences complementary to antecedent mobile elements, and target invading nucleic acids. CRISPR clusters are transcribed and processed into CRISPR RNA (crRNA). The type III-A Csm complex binds crRNA and acts as a crRNA-guided RNase, DNase and cyclic oligoadenylate synthase; binding of target RNA cognate to the crRNA is required for all activities. In a heterologous host this Csm effector complex restricts ssRNA phage MS2, suggesting it may target RNA viruses in vivo. This protein is not part of the Csm complex. Functionally, csm functions as a non-specific ssDNase. Base-pairing between crRNA and target RNA to form a ternary Csm complex activates a ssDNase activity; target RNA cleavage suppresses the ssDNase, a temporal control that prevents uncontrolled DNA degradation. Viral RNA transcripts probably tether the Csm complex to the viral genome, recruiting Cas10 ssDNA activity which is able to degrade DNA in the transcription bubble, spatially controlling the DNase activity. A single-strand-specific endoribonuclease (ssRNase) that is approximately 1000-fold stimulated by cyclic oligoadenylate (cOA); although several species of cOA are synthesized by this organism only cyclic hexaadenylate (cA6) stimulates the ssRNase activity. Cleaves preferentially within GA or AA dinucleotides, although the presence of cA6 broadens the preference. The protein is CRISPR system endoribonuclease Csm6' of Streptococcus thermophilus.